The sequence spans 206 residues: Small ribosomal subunit protein uS4 (206 aa).

The region spanning Arg96–Leu161 is the S4 RNA-binding domain.

Belongs to the universal ribosomal protein uS4 family. As to quaternary structure, part of the 30S ribosomal subunit. Contacts protein S5. The interaction surface between S4 and S5 is involved in control of translational fidelity.

Its function is as follows. One of the primary rRNA binding proteins, it binds directly to 16S rRNA where it nucleates assembly of the body of the 30S subunit. Functionally, with S5 and S12 plays an important role in translational accuracy. The polypeptide is Small ribosomal subunit protein uS4 (Legionella pneumophila (strain Paris)).